Consider the following 345-residue polypeptide: Biotin synthase (345 aa).

A Radical SAM core domain is found at 38-256; that stretch reads QQVQVSTLLS…IAVARIMMPS (219 aa). 3 residues coordinate [4Fe-4S] cluster: Cys-53, Cys-57, and Cys-60. The [2Fe-2S] cluster site is built by Cys-97, Cys-128, Cys-188, and Arg-260.

It belongs to the radical SAM superfamily. Biotin synthase family. As to quaternary structure, homodimer. The cofactor is [4Fe-4S] cluster. [2Fe-2S] cluster is required as a cofactor.

It carries out the reaction (4R,5S)-dethiobiotin + (sulfur carrier)-SH + 2 reduced [2Fe-2S]-[ferredoxin] + 2 S-adenosyl-L-methionine = (sulfur carrier)-H + biotin + 2 5'-deoxyadenosine + 2 L-methionine + 2 oxidized [2Fe-2S]-[ferredoxin]. It participates in cofactor biosynthesis; biotin biosynthesis; biotin from 7,8-diaminononanoate: step 2/2. Catalyzes the conversion of dethiobiotin (DTB) to biotin by the insertion of a sulfur atom into dethiobiotin via a radical-based mechanism. This Photorhabdus laumondii subsp. laumondii (strain DSM 15139 / CIP 105565 / TT01) (Photorhabdus luminescens subsp. laumondii) protein is Biotin synthase.